The chain runs to 387 residues: 3-ketoacyl-CoA thiolase (387 aa).

Catalysis depends on C91, which acts as the Acyl-thioester intermediate. Active-site proton acceptor residues include H343 and C373.

This sequence belongs to the thiolase-like superfamily. Thiolase family. In terms of assembly, heterotetramer of two alpha chains (FadB) and two beta chains (FadA).

It localises to the cytoplasm. It catalyses the reaction an acyl-CoA + acetyl-CoA = a 3-oxoacyl-CoA + CoA. The protein operates within lipid metabolism; fatty acid beta-oxidation. Catalyzes the final step of fatty acid oxidation in which acetyl-CoA is released and the CoA ester of a fatty acid two carbons shorter is formed. In Cronobacter sakazakii (strain ATCC BAA-894) (Enterobacter sakazakii), this protein is 3-ketoacyl-CoA thiolase.